A 251-amino-acid chain; its full sequence is Octanoyltransferase (251 aa).

Positions 29-251 constitute a BPL/LPL catalytic domain; it reads AATPNSLWIC…GQKLSSYLAP (223 aa). Residue 68–75 participates in substrate binding; that stretch reads RGGQVTYH. Positions 137-174 are disordered; it reads ARLRPSPQPSPKGRGSSTPVLLPPLPGEGGGGGGPDPD. Substrate contacts are provided by residues 184–186 and 197–199; these read ALG and GVA. Cys215 serves as the catalytic Acyl-thioester intermediate.

The protein belongs to the LipB family.

Its subcellular location is the cytoplasm. The enzyme catalyses octanoyl-[ACP] + L-lysyl-[protein] = N(6)-octanoyl-L-lysyl-[protein] + holo-[ACP] + H(+). It functions in the pathway protein modification; protein lipoylation via endogenous pathway; protein N(6)-(lipoyl)lysine from octanoyl-[acyl-carrier-protein]: step 1/2. Functionally, catalyzes the transfer of endogenously produced octanoic acid from octanoyl-acyl-carrier-protein onto the lipoyl domains of lipoate-dependent enzymes. Lipoyl-ACP can also act as a substrate although octanoyl-ACP is likely to be the physiological substrate. The chain is Octanoyltransferase from Polaromonas sp. (strain JS666 / ATCC BAA-500).